The sequence spans 113 residues: Large ribosomal subunit protein uL24 (113 aa).

Belongs to the universal ribosomal protein uL24 family. As to quaternary structure, part of the 50S ribosomal subunit.

Functionally, one of two assembly initiator proteins, it binds directly to the 5'-end of the 23S rRNA, where it nucleates assembly of the 50S subunit. In terms of biological role, one of the proteins that surrounds the polypeptide exit tunnel on the outside of the subunit. This Synechococcus sp. (strain RCC307) protein is Large ribosomal subunit protein uL24.